The chain runs to 516 residues: Nucleolar complex protein 4 homolog (516 aa).

3 helical membrane passes run 297 to 317 (ACDL…ILIH), 347 to 367 (FFHL…LVAA), and 375 to 395 (LALT…CNLL).

It belongs to the CBF/MAK21 family.

It localises to the nucleus membrane. The protein resides in the nucleus. It is found in the nucleolus. This Homo sapiens (Human) protein is Nucleolar complex protein 4 homolog (NOC4L).